A 525-amino-acid polypeptide reads, in one-letter code: GMP synthase [glutamine-hydrolyzing] (525 aa).

The Glutamine amidotransferase type-1 domain maps to 8-207 (KILILDFGSQ…ALDICGCDAN (200 aa)). Residue cysteine 85 is the Nucleophile of the active site. Residues histidine 181 and glutamate 183 contribute to the active site. Residues 208-400 (WKPSSIIEDA…LGLPYDMLYR (193 aa)) enclose the GMPS ATP-PPase domain. 235 to 241 (SGGVDSS) is an ATP binding site.

In terms of assembly, homodimer.

It catalyses the reaction XMP + L-glutamine + ATP + H2O = GMP + L-glutamate + AMP + diphosphate + 2 H(+). It participates in purine metabolism; GMP biosynthesis; GMP from XMP (L-Gln route): step 1/1. In terms of biological role, catalyzes the synthesis of GMP from XMP. This chain is GMP synthase [glutamine-hydrolyzing], found in Shewanella piezotolerans (strain WP3 / JCM 13877).